A 105-amino-acid polypeptide reads, in one-letter code: uncharacterized protein (105 aa).

This is an uncharacterized protein from Orgyia pseudotsugata multicapsid polyhedrosis virus (OpMNPV).